The following is a 510-amino-acid chain: Adenosine deaminase 2 (510 aa).

Positions 1–24 (MSGWPVLPALLLAVAMSSFHSATS) are cleaved as a signal peptide. The tract at residues 25-95 (RDEERNRLLM…GLMEKSAVFN (71 aa)) is dimerization. Residues His-107 and His-109 each coordinate Zn(2+). Asp-110 provides a ligand contact to substrate. N-linked (GlcNAc...) asparagine glycosylation is present at Asn-122. Residues 122–182 (NATYRPYCYF…TEFDNSLLRT (61 aa)) are PRB domain. A disulfide bridge links Cys-132 with Cys-156. N-linked (GlcNAc...) asparagine glycosylation occurs at Asn-171. Substrate contacts are provided by residues 201 to 208 (WKKFKTIF), His-290, and Gly-323. His-353 contacts Zn(2+). The Proton donor role is filled by Glu-356. A glycan (N-linked (GlcNAc...) asparagine) is linked at Asn-375. The Proton acceptor role is filled by His-381. Asp-438 provides a ligand contact to Zn(2+). Asp-439 serves as a coordination point for substrate.

The protein belongs to the metallo-dependent hydrolases superfamily. Adenosine and AMP deaminases family. ADGF subfamily. As to quaternary structure, homodimer. Interacts with adenosine receptors. Binds heparin. Zn(2+) is required as a cofactor.

Its subcellular location is the secreted. It catalyses the reaction adenosine + H2O + H(+) = inosine + NH4(+). Adenosine deaminase that may contribute to the degradation of extracellular adenosine, a signaling molecule that controls a variety of cellular responses. Requires elevated adenosine levels for optimal enzyme activity. Binds to cell surfaces via proteoglycans and may play a role in the regulation of cell proliferation and differentiation, independently of its enzyme activity. The chain is Adenosine deaminase 2 from Sus scrofa (Pig).